The primary structure comprises 391 residues: Chalcone synthase (391 aa).

Residue Cys-164 is part of the active site.

Belongs to the thiolase-like superfamily. Chalcone/stilbene synthases family.

The enzyme catalyses (E)-4-coumaroyl-CoA + 3 malonyl-CoA + 3 H(+) = 2',4,4',6'-tetrahydroxychalcone + 3 CO2 + 4 CoA. It participates in secondary metabolite biosynthesis; flavonoid biosynthesis. Functionally, the primary product of this enzyme is 4,2',4',6'-tetrahydroxychalcone (also termed naringenin-chalcone or chalcone) which can under specific conditions spontaneously isomerize into naringenin. This is Chalcone synthase (CHS) from Dianthus monspessulanus.